Consider the following 220-residue polypeptide: MAKNRFNQNWLHDHINDPYVKMAQREGYRARAAYKLKEIDEQDKLIRPGQVIVDLGATPGSWSQYARNKLAQGKKRDTQREGGIDGTIIALDLLPMEPIADVHFIQGDFREDDVLRQLEDVLEGRAVDLVISDMAPNLSGVASADAARIEHLCDLALEFAQNHLKPDGALLVKCFHGSGYSQIVEKFKQQFKVVAPRKPKASRDKSSETFILGRQLKQPR.

S-adenosyl-L-methionine contacts are provided by glycine 60, tryptophan 62, aspartate 92, aspartate 108, and aspartate 133. The Proton acceptor role is filled by lysine 173. A disordered region spans residues 197 to 220 (RKPKASRDKSSETFILGRQLKQPR).

Belongs to the class I-like SAM-binding methyltransferase superfamily. RNA methyltransferase RlmE family.

The protein localises to the cytoplasm. It catalyses the reaction uridine(2552) in 23S rRNA + S-adenosyl-L-methionine = 2'-O-methyluridine(2552) in 23S rRNA + S-adenosyl-L-homocysteine + H(+). Functionally, specifically methylates the uridine in position 2552 of 23S rRNA at the 2'-O position of the ribose in the fully assembled 50S ribosomal subunit. This Burkholderia ambifaria (strain ATCC BAA-244 / DSM 16087 / CCUG 44356 / LMG 19182 / AMMD) (Burkholderia cepacia (strain AMMD)) protein is Ribosomal RNA large subunit methyltransferase E.